A 372-amino-acid polypeptide reads, in one-letter code: Alanine racemase (372 aa).

Lys33 functions as the Proton acceptor; specific for D-alanine in the catalytic mechanism. N6-(pyridoxal phosphate)lysine is present on Lys33. Substrate is bound at residue Arg131. Tyr261 serves as the catalytic Proton acceptor; specific for L-alanine. Residue Met309 coordinates substrate.

It belongs to the alanine racemase family. It depends on pyridoxal 5'-phosphate as a cofactor.

The enzyme catalyses L-alanine = D-alanine. It functions in the pathway amino-acid biosynthesis; D-alanine biosynthesis; D-alanine from L-alanine: step 1/1. Its function is as follows. Catalyzes the interconversion of L-alanine and D-alanine. May also act on other amino acids. The polypeptide is Alanine racemase (alr) (Salinispora arenicola (strain CNS-205)).